Consider the following 214-residue polypeptide: Outer membrane lipoprotein MapA (214 aa).

Residues 1–17 (MFKKFLIFIVPILFLSA) form the signal peptide. C18 is lipidated: N-palmitoyl cysteine. Residue C18 is the site of S-diacylglycerol cysteine attachment.

The protein localises to the cell outer membrane. This is Outer membrane lipoprotein MapA (mapA) from Campylobacter jejuni subsp. jejuni serotype O:6 (strain 81116 / NCTC 11828).